The sequence spans 115 residues: Putative gamma-glutamylcyclotransferase VC_2546 (115 aa).

Position 8–11 (8–11 (YGTL)) interacts with substrate. Catalysis depends on Glu-73, which acts as the Proton acceptor.

The protein belongs to the gamma-glutamylcyclotransferase family.

Functionally, putative gamma-glutamylcyclotransferase. The chain is Putative gamma-glutamylcyclotransferase VC_2546 from Vibrio cholerae serotype O1 (strain ATCC 39315 / El Tor Inaba N16961).